The following is a 415-amino-acid chain: uncharacterized protein (415 aa).

Disordered regions lie at residues 329–351 (KFNK…TESS) and 388–415 (KSMM…IITL). The span at 338–348 (LQNESGDDSET) shows a compositional bias: acidic residues. The span at 399-409 (KSNRKSNKRSN) shows a compositional bias: basic residues.

This is an uncharacterized protein from Acanthamoeba polyphaga mimivirus (APMV).